A 243-amino-acid chain; its full sequence is UPF0758 protein Tery_2667 (243 aa).

An MPN domain is found at 113 to 235 (VVESPQAAAD…HSSLRQITNL (123 aa)). Zn(2+) contacts are provided by H184, H186, and D197. The JAMM motif motif lies at 184-197 (HNHPSGNVEPSPED).

The protein belongs to the UPF0758 family.

This Trichodesmium erythraeum (strain IMS101) protein is UPF0758 protein Tery_2667.